A 106-amino-acid chain; its full sequence is Small ribosomal subunit protein bS18 (106 aa).

Positions 1-22 are enriched in basic and acidic residues; it reads MSEETTVRPERTERSERPERPQ. A disordered region spans residues 1–34; sequence MSEETTVRPERTERSERPERPQYRGNGPRKRRPF.

The protein belongs to the bacterial ribosomal protein bS18 family. Part of the 30S ribosomal subunit. Forms a tight heterodimer with protein bS6.

Functionally, binds as a heterodimer with protein bS6 to the central domain of the 16S rRNA, where it helps stabilize the platform of the 30S subunit. The protein is Small ribosomal subunit protein bS18 of Geobacter metallireducens (strain ATCC 53774 / DSM 7210 / GS-15).